Reading from the N-terminus, the 513-residue chain is rRNA N(6)-adenosine-methyltransferase ZCCHC4 (513 aa).

Positions 40, 42, 64, 73, 125, 128, 140, and 143 each coordinate Zn(2+). Residues 40-82 (CPHGPTLLFVKVTQGKEETRRFYACSACRDRKDCNFFQWEDEK) form a GRF-type zinc finger. S-adenosyl-L-methionine contacts are provided by residues 172 to 175 (QYLF), Arg-202, Asp-225, 243 to 244 (NM), and Asp-276. Positions 337 to 357 (QVDYDNHALYKHGKTGRKQSP) are regulatory loop. 16 residues coordinate Zn(2+): Cys-380, Cys-383, His-393, Cys-394, Cys-397, Cys-400, His-410, Cys-411, Cys-414, Cys-417, His-424, Cys-425, Cys-428, Cys-431, His-436, and Cys-438. The DHHC domain occupies 395 to 447 (ELCNSCTSKDGRKWNHCFLCKKCVKPSWIHCSICNHCAVPDHSCEGPKHGCFI). The segment at 443-460 (HGCFICGELDHKRSTCPN) adopts a CCHC-type zinc-finger fold. The span at 466–481 (RANKAVRKQKQRKSNK) shows a compositional bias: basic residues. The segment at 466 to 513 (RANKAVRKQKQRKSNKMKMETTKGQSMNHTSATRRKKRRERAHQYLGS) is disordered. A compositionally biased stretch (polar residues) spans 487–496 (TKGQSMNHTS). The segment covering 497-506 (ATRRKKRRER) has biased composition (basic residues).

Belongs to the ZCCHC4 family. As to quaternary structure, interacts with components of the ASC-1 complex TRIP4, ASCC1, ASCC2 and ASCC3. Interact with AHCYL1 and AHCYL2. Interact with YTHDC2.

It is found in the nucleus. The protein localises to the nucleolus. It localises to the cytoplasm. It catalyses the reaction adenosine(4220) in 28S rRNA + S-adenosyl-L-methionine = N(6)-methyladenosine(4220) in 28S rRNA + S-adenosyl-L-homocysteine + H(+). RRNA N6-methyltransferase that specifically methylates the adenine in position 4220 of 28S rRNA. N6-methylation of adenine(4220) in 28S rRNA is required for translation. The polypeptide is rRNA N(6)-adenosine-methyltransferase ZCCHC4 (Homo sapiens (Human)).